A 448-amino-acid chain; its full sequence is Tubulin beta-2 chain (448 aa).

Residues Gln11, Glu69, Ser138, Gly142, Thr143, Gly144, Asn204, and Asn226 each coordinate GTP. Glu69 contacts Mg(2+). The interval 429-448 (TADEDGYEYEDEEEVGEEDA) is disordered.

It belongs to the tubulin family. In terms of assembly, dimer of alpha and beta chains. A typical microtubule is a hollow water-filled tube with an outer diameter of 25 nm and an inner diameter of 15 nM. Alpha-beta heterodimers associate head-to-tail to form protofilaments running lengthwise along the microtubule wall with the beta-tubulin subunit facing the microtubule plus end conferring a structural polarity. Microtubules usually have 13 protofilaments but different protofilament numbers can be found in some organisms and specialized cells. The cofactor is Mg(2+).

It is found in the cytoplasm. The protein localises to the cytoskeleton. Functionally, tubulin is the major constituent of microtubules, a cylinder consisting of laterally associated linear protofilaments composed of alpha- and beta-tubulin heterodimers. Microtubules grow by the addition of GTP-tubulin dimers to the microtubule end, where a stabilizing cap forms. Below the cap, tubulin dimers are in GDP-bound state, owing to GTPase activity of alpha-tubulin. This is Tubulin beta-2 chain (TUBB2) from Lupinus albus (White lupine).